The sequence spans 477 residues: Glutamate--tRNA ligase (477 aa).

A 'HIGH' region motif is present at residues 18–28 (PSPTGFIHLGN). Residues 128-138 (PRYDGSWRPEP) are compositionally biased toward basic and acidic residues. The interval 128-151 (PRYDGSWRPEPGKTLPPVPAGMSP) is disordered. The short motif at 250-254 (KLSKR) is the 'KMSKS' region element. Position 253 (Lys-253) interacts with ATP.

This sequence belongs to the class-I aminoacyl-tRNA synthetase family. Glutamate--tRNA ligase type 1 subfamily. As to quaternary structure, monomer.

The protein resides in the cytoplasm. It catalyses the reaction tRNA(Glu) + L-glutamate + ATP = L-glutamyl-tRNA(Glu) + AMP + diphosphate. Its function is as follows. Catalyzes the attachment of glutamate to tRNA(Glu) in a two-step reaction: glutamate is first activated by ATP to form Glu-AMP and then transferred to the acceptor end of tRNA(Glu). The chain is Glutamate--tRNA ligase from Verminephrobacter eiseniae (strain EF01-2).